The primary structure comprises 359 residues: RNA-binding protein 4B (359 aa).

2 consecutive RRM domains span residues 2–72 (VKLF…ASKN) and 78–148 (TKLH…LSTS). The segment at 160–177 (SGCYRCGKEGHWSKECPV) adopts a CCHC-type zinc-finger fold. Residues 196–359 (AVRTPYTMGY…YVDRARYSAF (164 aa)) form an interaction with TNPO3 region.

As to quaternary structure, interacts with TNPO3, which may mediate nuclear import of the protein. Expressed in liver and kidney (at protein level). Ubiquitously expressed.

It is found in the nucleus. The protein resides in the nucleolus. In terms of biological role, required for the translational activation of PER1 mRNA in response to circadian clock. Binds directly to the 3'-UTR of the PER1 mRNA. This is RNA-binding protein 4B (RBM4B) from Homo sapiens (Human).